Reading from the N-terminus, the 301-residue chain is MKNNHIPVLLNEVLDNLALKENGIYIDLTLGMGGHSKEILKRIPKGKLIAFDKDDFAIKNASKTLSEVANNFEIIKSDFKDFKEELSNLGIYKVDGILADLGISSPQIDNAERGFSYLKNSALDMRMDQSQKLSAYDVVNLYPVEKLEYILKTYGEVKNYKYIASKIIEARPINTTLELANLIKSVTPQKLLKLKNPAKNVFQAIRIEVNNELDSIHQMLSSVEDLLKVNASLLIISFHSLEDKIVKNYFQELTKPKLPSKMPIQEDKFFATRRIYPSKQELNLNSRSKSAKLRILTKIKD.

Residues 33–35, D52, F79, D100, and Q107 each bind S-adenosyl-L-methionine; that span reads GGH.

The protein belongs to the methyltransferase superfamily. RsmH family.

The protein localises to the cytoplasm. It carries out the reaction cytidine(1402) in 16S rRNA + S-adenosyl-L-methionine = N(4)-methylcytidine(1402) in 16S rRNA + S-adenosyl-L-homocysteine + H(+). Functionally, specifically methylates the N4 position of cytidine in position 1402 (C1402) of 16S rRNA. The chain is Ribosomal RNA small subunit methyltransferase H from Mycoplasmopsis synoviae (strain 53) (Mycoplasma synoviae).